The sequence spans 230 residues: Small ribosomal subunit protein uS3 (230 aa).

One can recognise a KH type-2 domain in the interval 39 to 107; the sequence is VRNYLRQKLA…PVHVNIEEIR (69 aa). Residues 210–230 are disordered; it reads SSKPEHESKQRKAGRRNAAAN.

Belongs to the universal ribosomal protein uS3 family. Part of the 30S ribosomal subunit. Forms a tight complex with proteins S10 and S14.

In terms of biological role, binds the lower part of the 30S subunit head. Binds mRNA in the 70S ribosome, positioning it for translation. The protein is Small ribosomal subunit protein uS3 of Neisseria meningitidis serogroup C (strain 053442).